We begin with the raw amino-acid sequence, 462 residues long: MTIFSRIPKVDRILEQDEVRRLLADHPRPTVLAAVRTALDALRAEARAGSLREQDLADGAVAGRVGREVARSTACSLRRVVNGTGVVIHTNLGRSPLAERVRQRVDDTAYGYSNLEFDLERGERGSRYSHVEKLLCELTGAEAALVVNNNAAAVLLALSALAGGKEVIVSRGELVEIGGSFRIPDVMQQGGAVLREVGTTNRTHSRDYRQAVTSETGLLLKVHSSNFAVVGFTAEVTAPEMVAIGRELGLPVMADIGSGCLIDLSRFGIRGEPTVQEFVSVGVDVVTFSGDKLLGGPQAGIIVGRKAYVDPLKKHPLLRAIRIDKLTLAALEGTLRLYRDERQALAEVPTLRMLTASAEELRLRARQFMRRLRRGVPSSVRLASLDGVSQVGGGAYPLLELPTTLIAVDVDGVSPQEMEARLRRMTVPVVGRINRGRFLLDARTLLDDDAPAVISALRELAS.

At lysine 292 the chain carries N6-(pyridoxal phosphate)lysine.

Belongs to the SelA family. Pyridoxal 5'-phosphate is required as a cofactor.

The protein localises to the cytoplasm. It catalyses the reaction L-seryl-tRNA(Sec) + selenophosphate + H(+) = L-selenocysteinyl-tRNA(Sec) + phosphate. Its pathway is aminoacyl-tRNA biosynthesis; selenocysteinyl-tRNA(Sec) biosynthesis; selenocysteinyl-tRNA(Sec) from L-seryl-tRNA(Sec) (bacterial route): step 1/1. Its function is as follows. Converts seryl-tRNA(Sec) to selenocysteinyl-tRNA(Sec) required for selenoprotein biosynthesis. The polypeptide is L-seryl-tRNA(Sec) selenium transferase (Geobacter sulfurreducens (strain ATCC 51573 / DSM 12127 / PCA)).